A 1021-amino-acid polypeptide reads, in one-letter code: Disease resistance protein Pikm2-TS (1021 aa).

Positions 1-182 are structured coiled coil (CC) domain; it reads MELVVGASEA…PQIIGIKEPV (182 aa). Positions 186–519 constitute an NB-ARC domain; the sequence is TVMEELEVWL…WIAEGFANEK (334 aa). The interval 297–317 is disordered; sequence PENDGNPDNTPIRLQETTDDD. LRR repeat units follow at residues 612–634, 659–682, and 683–705; these read LAQVRSLTVFGNLNHVPFHSFNY, MLLLKYLSIRRTEISKIPSKIQKL, and EYLETLDIRETYVRDLPKSIVQL. Residues 719 to 751 form a disordered region; that stretch reads RKGLRLPQEKSKKPIKNPSPQGKTKEPAKKGFL. LRR repeat units lie at residues 785–807, 817–841, 843–865, 866–888, 912–935, and 957–981; these read LTGLRKLAIYKLNITKGGDTFKQ, SCGLQTLAINDENSEFINSLGDMPA, PRYLVALELSGKLEKLPKWITSI, TTLNKLTISVTVLRTETLEILHI, KDILENNKLDSDGEIVIPAEGFKS, and MPALEIIEMRFKDFEGLFGIEILEN.

It belongs to the disease resistance NB-LRR family. Constitutively expressed.

Its function is as follows. Disease resistance (R) protein. Resistance proteins guard the plant against pathogens that contain an appropriate avirulence protein via an indirect interaction with this avirulence protein. That triggers a defense system including the hypersensitive response, which restricts the pathogen growth. Contribution of Pikm-1 is required to recognize the effector avirulence protein AVR-Pik. The sequence is that of Disease resistance protein Pikm2-TS from Oryza sativa subsp. japonica (Rice).